The primary structure comprises 388 residues: Chorismate synthase (388 aa).

The NADP(+) site is built by Arg39 and Arg45. Residues 130–132, 251–252, Gly296, 311–315, and Arg337 each bind FMN; these read RSS, NA, and KPIPT.

This sequence belongs to the chorismate synthase family. As to quaternary structure, homotetramer. Requires FMNH2 as cofactor.

It catalyses the reaction 5-O-(1-carboxyvinyl)-3-phosphoshikimate = chorismate + phosphate. Its pathway is metabolic intermediate biosynthesis; chorismate biosynthesis; chorismate from D-erythrose 4-phosphate and phosphoenolpyruvate: step 7/7. Catalyzes the anti-1,4-elimination of the C-3 phosphate and the C-6 proR hydrogen from 5-enolpyruvylshikimate-3-phosphate (EPSP) to yield chorismate, which is the branch point compound that serves as the starting substrate for the three terminal pathways of aromatic amino acid biosynthesis. This reaction introduces a second double bond into the aromatic ring system. This Geobacillus thermodenitrificans (strain NG80-2) protein is Chorismate synthase.